We begin with the raw amino-acid sequence, 259 residues long: Src-like-adapter 2 (259 aa).

Over residues 1-20 (MGSLSSRGKTSSPSPSSSGP) the composition is skewed to low complexity. The disordered stretch occupies residues 1–30 (MGSLSSRGKTSSPSPSSSGPDQEPVSMQPE). A lipid anchor (N-myristoyl glycine) is attached at Gly2. Residues 31-91 (RHKVTAVALG…PSVYVAKVAH (61 aa)) form the SH3 domain. The 98-residue stretch at 93–190 (WLYEGLSREK…GICCPLREPC (98 aa)) folds into the SH2 domain. An SLA C-terminal region spans residues 190–259 (CVLQKLGPLP…SLAEDPLDDA (70 aa)).

Interacts (via its C-terminal domain) with CBL (phosphorylated). Interacts (via SH2 domain) with ZAP70 (phosphorylated) and CD3Z (phosphorylated). Interacts (via SH2 domain) with CSF1R (phosphorylated). In terms of processing, phosphorylated by CSF1R. In terms of tissue distribution, mainly expressed in immune system. Highly expressed in spleen and thymus and expressed at intermediate levels in lung. Not expressed in liver, heart and brain. Isoform 1 is predominant in lung and spleen, while isoform 2 is predominant in thymus.

The protein resides in the cytoplasm. It is found in the cell membrane. Its subcellular location is the cytoplasmic vesicle. It localises to the late endosome. Adapter protein, which negatively regulates T-cell receptor (TCR) signaling. Inhibits T-cell antigen-receptor induced activation of nuclear factor of activated T-cells. May act by linking signaling proteins such as ZAP70 with CBL, leading to a CBL dependent degradation of signaling proteins. This chain is Src-like-adapter 2 (Sla2), found in Mus musculus (Mouse).